A 389-amino-acid chain; its full sequence is S-adenosylmethionine synthase (389 aa).

His-15 provides a ligand contact to ATP. Asp-17 is a binding site for Mg(2+). Position 43 (Glu-43) interacts with K(+). Positions 56 and 99 each coordinate L-methionine. Residues 99-109 (QSPDIAQGVNE) are flexible loop. ATP contacts are provided by residues 166-168 (DAK), 234-235 (RF), Asp-243, 249-250 (RK), Ala-266, and Lys-270. Residue Asp-243 participates in L-methionine binding. Residue Lys-274 coordinates L-methionine.

This sequence belongs to the AdoMet synthase family. Homotetramer; dimer of dimers. The cofactor is Mg(2+). K(+) serves as cofactor.

Its subcellular location is the cytoplasm. It catalyses the reaction L-methionine + ATP + H2O = S-adenosyl-L-methionine + phosphate + diphosphate. The protein operates within amino-acid biosynthesis; S-adenosyl-L-methionine biosynthesis; S-adenosyl-L-methionine from L-methionine: step 1/1. Catalyzes the formation of S-adenosylmethionine (AdoMet) from methionine and ATP. The overall synthetic reaction is composed of two sequential steps, AdoMet formation and the subsequent tripolyphosphate hydrolysis which occurs prior to release of AdoMet from the enzyme. The chain is S-adenosylmethionine synthase from Neisseria meningitidis serogroup B (strain ATCC BAA-335 / MC58).